A 1916-amino-acid polypeptide reads, in one-letter code: Endoribonuclease Dicer (1916 aa).

The 177-residue stretch at 51–227 (LLEAALDHNT…ELEEKIQKLE (177 aa)) folds into the Helicase ATP-binding domain. An ATP-binding site is contributed by 64–71 (LNTGSGKT). The short motif at 175–178 (DECH) is the DECH box element. The interval 256-595 (DCGPFTDRSG…LRNKCSKSAD (340 aa)) is required for interaction with PRKRA and TARBP2. The segment at 409 to 433 (YVSWSDSEDDDDDEEIEEKEKPETN) is disordered. Serine 413 and serine 415 each carry phosphoserine. Acidic residues predominate over residues 414-425 (DSEDDDDDEEIE). Residues 433–602 (NFPSPFTNIL…SADGAEADVH (170 aa)) enclose the Helicase C-terminal domain. The Dicer dsRNA-binding fold domain maps to 630 to 722 (AIGHINRYCA…MPVGKETVKY (93 aa)). Residues 726–745 (LDLHDEEETSVPGRPGSTKR) are disordered. Residues 895–1042 (KFMEDIEKSE…LVPELCAIHP (148 aa)) enclose the PAZ domain. Phosphoserine is present on residues serine 1016 and serine 1160. The 128-residue stretch at 1276-1403 (DSEQSPSVGY…SEKWEKDEMT (128 aa)) folds into the RNase III 1 domain. The Mg(2+) site is built by glutamate 1316, glutamate 1395, and glutamate 1398. 3 positions are modified to phosphoserine: serine 1456, serine 1464, and serine 1466. Residues 1598–1626 (ALDPAQENGSSQQKSLSGSCAAPVGPRSS) are disordered. The span at 1604–1615 (ENGSSQQKSLSG) shows a compositional bias: polar residues. In terms of domain architecture, RNase III 2 spans 1660-1818 (FETFEKKINY…LAGAIYMDSG (159 aa)). Mg(2+)-binding residues include glutamate 1699, aspartate 1804, and glutamate 1807. A DRBM domain is found at 1843–1908 (VPRSPVRELL…ARRALRSLKA (66 aa)). Serine 1862 carries the phosphoserine modification.

This sequence belongs to the helicase family. Dicer subfamily. As to quaternary structure, component of the RISC loading complex (RLC), or micro-RNA (miRNA) loading complex (miRLC), which is composed of DICER1, AGO2 and TARBP2; DICER1 and TARBP2 are required to process precursor miRNAs (pre-miRNAs) to mature miRNAs and then load them onto AGO2. Note that the trimeric RLC/miRLC is also referred to as RISC. Interacts with DHX9, AGO1, PIWIL1 and PRKRA. Interacts with AGO2, TARBP2, EIF6, MOV10 and RPL7A (60S ribosome subunit); they form a large RNA-induced silencing complex (RISC). Interacts with BCDIN3D. Interacts (via Dicer dsRNA-binding fold domain) with ALOX5 (via PLAT domain); this interaction enhances arachidonate 5-lipoxygenase activity and modifies the miRNA precursor processing activity of DICER1. Requires Mg(2+) as cofactor. Mn(2+) serves as cofactor. Isoform 1 is expressed in a wide variety of tissues. Isoform 2 is specifically expressed in oocytes during their growth (at protein level).

Its subcellular location is the cytoplasm. It catalyses the reaction Endonucleolytic cleavage to 5'-phosphomonoester.. In terms of biological role, double-stranded RNA (dsRNA) endoribonuclease playing a central role in short dsRNA-mediated post-transcriptional gene silencing. Cleaves naturally occurring long dsRNAs and short hairpin pre-microRNAs (miRNA) into fragments of twenty-one to twenty-three nucleotides with 3' overhang of two nucleotides, producing respectively short interfering RNAs (siRNA) and mature microRNAs. SiRNAs and miRNAs serve as guide to direct the RNA-induced silencing complex (RISC) to complementary RNAs to degrade them or prevent their translation. Gene silencing mediated by siRNAs, also called RNA interference, controls the elimination of transcripts from mobile and repetitive DNA elements of the genome but also the degradation of exogenous RNA of viral origin for instance. The miRNA pathway on the other side is a mean to specifically regulate the expression of target genes. More active than isoform 1 to process long double-stranded RNA into siRNAs. Responsible for the accumulation of endogenous siRNAs observed in mouse oocytes compared to somatic cells and it regulates meiotic spindle organization in female germline. The sequence is that of Endoribonuclease Dicer (Dicer1) from Mus musculus (Mouse).